The chain runs to 248 residues: 3-deoxy-manno-octulosonate cytidylyltransferase (248 aa).

This sequence belongs to the KdsB family.

It is found in the cytoplasm. The enzyme catalyses 3-deoxy-alpha-D-manno-oct-2-ulosonate + CTP = CMP-3-deoxy-beta-D-manno-octulosonate + diphosphate. The protein operates within nucleotide-sugar biosynthesis; CMP-3-deoxy-D-manno-octulosonate biosynthesis; CMP-3-deoxy-D-manno-octulosonate from 3-deoxy-D-manno-octulosonate and CTP: step 1/1. Its pathway is bacterial outer membrane biogenesis; lipopolysaccharide biosynthesis. Activates KDO (a required 8-carbon sugar) for incorporation into bacterial lipopolysaccharide in Gram-negative bacteria. This Salmonella paratyphi A (strain ATCC 9150 / SARB42) protein is 3-deoxy-manno-octulosonate cytidylyltransferase.